A 197-amino-acid polypeptide reads, in one-letter code: Protein shisa-4 (197 aa).

An N-terminal signal peptide occupies residues 1-27 (MPPAGLRRAAPLTAIALLVLGAPLVLA). The Extracellular portion of the chain corresponds to 28 to 87 (GEDCLWYLDRNGSWHPGFNCEFFTFCCGTCYHRYCCRDLTLLITERQQKHCLAFSPKTIA). A helical transmembrane segment spans residues 88–108 (GIASAVILFVAVVATTICCFL). At 109–197 (CSCCYLYRRR…MPPQPSYPGA (89 aa)) the chain is on the cytoplasmic side.

Belongs to the shisa family.

The protein resides in the membrane. The polypeptide is Protein shisa-4 (SHISA4) (Homo sapiens (Human)).